A 118-amino-acid chain; its full sequence is uncharacterized protein (118 aa).

Helical transmembrane passes span 22 to 44 (IIAS…FSIA), 54 to 71 (LSPL…PVLR), and 78 to 99 (PILS…VEWL).

The protein localises to the cell membrane. This is an uncharacterized protein from Archaeoglobus fulgidus (strain ATCC 49558 / DSM 4304 / JCM 9628 / NBRC 100126 / VC-16).